The primary structure comprises 692 residues: A-type ATP synthase subunit I (692 aa).

7 helical membrane passes run Gly-389 to Trp-409, Leu-422 to Gly-442, Ile-494 to Phe-514, Gly-531 to Ala-551, Thr-553 to Tyr-573, Ala-602 to Ala-622, and Leu-624 to Gly-644.

It belongs to the V-ATPase 116 kDa subunit family. In terms of assembly, the A-type ATPase is composed of subunits A(3), B(3), C, D, E(1 or 2), F, H(2), I and K(x).

It is found in the cell membrane. Its function is as follows. Component of the A-type ATP synthase that produces ATP from ADP in the presence of a proton gradient across the membrane. The chain is A-type ATP synthase subunit I from Methanocaldococcus jannaschii (strain ATCC 43067 / DSM 2661 / JAL-1 / JCM 10045 / NBRC 100440) (Methanococcus jannaschii).